Here is a 266-residue protein sequence, read N- to C-terminus: MPRSFLVKKHFNSAKKPNYGELDNHTVIISPFLYERYPVSVLPQPDIYSSVAYSPITVWTGLLHPPLPSDLSPLSGYPSSLGRVSPPPQSDTSSKDHSGSESPISDEEERLQTKLSDSHAIEAEKFQCSLCSKTYSTFSGLAKHKQLHCDAQSRKSFSCKYCEKEYVSLGALKMHIRTHTLPCVCKICGKAFSRPWLLQGHIRTHTGEKPFSCPHCNRAFADRSNLRAHLQTHSDVKKYQCKNCSKTFSRMSLLHKHEESGCCVAH.

The SNAG domain stretch occupies residues 1–20 (MPRSFLVKKHFNSAKKPNYG). The disordered stretch occupies residues 75–115 (SGYPSSLGRVSPPPQSDTSSKDHSGSESPISDEEERLQTKL). 4 consecutive C2H2-type zinc fingers follow at residues 126–148 (FQCS…KQLH), 157–179 (FSCK…IRTH), 183–205 (CVCK…IRTH), and 211–233 (FSCP…LQTH). The C2H2-type 5; atypical zinc-finger motif lies at 239–262 (YQCKNCSKTFSRMSLLHKHEESGC).

The protein belongs to the snail C2H2-type zinc-finger protein family. Interacts (via SNAG domain) with limd1 (via LIM domains), wtip (via LIM domains) and ajuba (via LIM domains). Interacts with elp3. First expressed on the lateral side of stage 12 embryos. At stage 14, strongly expressed in the lateral neural folds. At stage 16, expressed in pre-migratory neural crest cells. At stage 18, expression is dispersed over the neural plate in a pattern surrounding the rhombomeres. At stage 22, expressed in neural crest derivatives, including the branchial arches and the tissues surrounding the eyes and forebrain. After stage 17, expression is weak in the lateral plate mesoderm, increasing at stage 26, but was down-regulated in the pronephros region at stage 26.

It is found in the nucleus. Its function is as follows. Probable transcriptional repressor. Acts downstream of snai1 in the specification of the neural crest and neural crest migration. In Xenopus laevis (African clawed frog), this protein is Zinc finger protein SNAI2 (snai2).